We begin with the raw amino-acid sequence, 310 residues long: tRNA dimethylallyltransferase (310 aa).

14-21 (GPTASGKT) contacts ATP. Substrate is bound at residue 16-21 (TASGKT). Interaction with substrate tRNA stretches follow at residues 39 to 42 (DSAL), 163 to 167 (QRLSR), and 244 to 249 (RCVGYR).

Belongs to the IPP transferase family. In terms of assembly, monomer. Requires Mg(2+) as cofactor.

It carries out the reaction adenosine(37) in tRNA + dimethylallyl diphosphate = N(6)-dimethylallyladenosine(37) in tRNA + diphosphate. Its function is as follows. Catalyzes the transfer of a dimethylallyl group onto the adenine at position 37 in tRNAs that read codons beginning with uridine, leading to the formation of N6-(dimethylallyl)adenosine (i(6)A). The protein is tRNA dimethylallyltransferase of Tolumonas auensis (strain DSM 9187 / NBRC 110442 / TA 4).